A 286-amino-acid polypeptide reads, in one-letter code: Deleted in azoospermia-like-A (286 aa).

One can recognise an RRM domain in the interval 33–114 (NTVFVGGIDI…PAIRKICTYV (82 aa)). One can recognise a DAZ domain in the interval 155–180 (ACPYPSSPPMAIQQIPVGCQQPGYFQ).

This sequence belongs to the RRM DAZ family. As to quaternary structure, interacts with the C-terminus of pabp1 and with epabp. Prior to oocyte maturation, found in a complex with epabp and pum2 proteins and spdy1 mRNA; pum2 dissociates from the complex during maturation. In terms of tissue distribution, germ-line specific. Oocyte mRNA expression is first restricted to the granulo-fibrillar material (GFM) of the mitochondrial cloud and then to the oocyte germ plasm at the vegetal cortex. Remains an mRNA component of the germ plasm until the neurula stage. In 2-8 cell embryos, expressed in the germ plasm matrix between germinal granules and mitochondria. Expressed in primordial germ cells (PGCs) later in embryogenesis. In addition to the ovaries of adult females, expressed in the testis of adult and juvenile males in spermatogonia and spermatocytes. The protein is restricted to the embryonic germ plasm and primordial germ cells.

The protein resides in the cytoplasm. In terms of biological role, RNA-binding protein that is required for primordial germ cell (PGC) differentiation and indirectly necessary for the migration of PGCs through the endoderm. May promote meiotic cell division during spermatogenesis. Shows a preference for G- and U-rich RNAs and probably binds the 3'-UTR of target mRNAs. Stimulates the initiation of translation of mRNAs through the recruitment of poly(A)-binding proteins (PABPs). The protein is Deleted in azoospermia-like-A (dazl-a) of Xenopus laevis (African clawed frog).